Reading from the N-terminus, the 552-residue chain is Putative acetolactate synthase large subunit IlvB2 (552 aa).

Glu48 is a binding site for thiamine diphosphate. FAD contacts are provided by residues 262–285 (FGDG…VGVS) and 309–328 (DPDP…ITTS). A thiamine pyrophosphate binding region spans residues 394–474 (TCISWTFRGI…VTWAVLNDGQ (81 aa)). Asp445 contributes to the Mg(2+) binding site.

Belongs to the TPP enzyme family. Heterodimer of large catalytic subunit and small regulatory subunit. Requires Mg(2+) as cofactor. The cofactor is thiamine diphosphate.

It carries out the reaction 2 pyruvate + H(+) = (2S)-2-acetolactate + CO2. It functions in the pathway amino-acid biosynthesis; L-isoleucine biosynthesis; L-isoleucine from 2-oxobutanoate: step 1/4. The protein operates within amino-acid biosynthesis; L-valine biosynthesis; L-valine from pyruvate: step 1/4. In terms of biological role, catalyzes the conversion of 2 pyruvate molecules into acetolactate in the first common step of the biosynthetic pathway of the branched-amino acids such as leucine, isoleucine, and valine. This chain is Putative acetolactate synthase large subunit IlvB2 (ilvB2), found in Mycobacterium tuberculosis (strain ATCC 25618 / H37Rv).